We begin with the raw amino-acid sequence, 120 residues long: NADH-quinone oxidoreductase subunit A (120 aa).

3 consecutive transmembrane segments (helical) span residues 10–30, 65–85, and 89–109; these read ILVF…MGWF, VAIL…WAVV, and IGWF…VGFI.

It belongs to the complex I subunit 3 family. In terms of assembly, NDH-1 is composed of 14 different subunits. Subunits NuoA, H, J, K, L, M, N constitute the membrane sector of the complex.

It is found in the cell inner membrane. It catalyses the reaction a quinone + NADH + 5 H(+)(in) = a quinol + NAD(+) + 4 H(+)(out). In terms of biological role, NDH-1 shuttles electrons from NADH, via FMN and iron-sulfur (Fe-S) centers, to quinones in the respiratory chain. The immediate electron acceptor for the enzyme in this species is believed to be ubiquinone. Couples the redox reaction to proton translocation (for every two electrons transferred, four hydrogen ions are translocated across the cytoplasmic membrane), and thus conserves the redox energy in a proton gradient. The chain is NADH-quinone oxidoreductase subunit A from Coxiella burnetii (strain Dugway 5J108-111).